Consider the following 709-residue polypeptide: Golgin-84 (709 aa).

The Cytoplasmic segment spans residues Met-1–Pro-664. Disordered regions lie at residues Thr-24 to Arg-132, Glu-144 to Ala-195, and Glu-211 to Glu-265. Positions Glu-29–Gly-43 are enriched in low complexity. Residues Pro-78–Arg-89 show a composition bias toward basic and acidic residues. The span at Val-94 to Val-113 shows a compositional bias: low complexity. Basic and acidic residues predominate over residues Lys-114–Arg-132. Over residues Asp-162–Ser-180 the composition is skewed to low complexity. Composition is skewed to basic and acidic residues over residues Glu-211–Pro-222 and Gln-248–Glu-265. Residues Arg-287–Ser-592 adopt a coiled-coil conformation. A helical; Signal-anchor for type II membrane protein membrane pass occupies residues Val-665–Leu-684. At Met-685 to Asp-707 the chain is on the lumenal side.

It is found in the golgi apparatus membrane. Functionally, may be involved in maintaining Golgi structure and in intra-Golgi transport. The sequence is that of Golgin-84 from Oryza sativa subsp. japonica (Rice).